We begin with the raw amino-acid sequence, 374 residues long: DNA replication and repair protein RecF (374 aa).

30–37 lines the ATP pocket; the sequence is GPNAQGKT.

Belongs to the RecF family.

It localises to the cytoplasm. Its function is as follows. The RecF protein is involved in DNA metabolism; it is required for DNA replication and normal SOS inducibility. RecF binds preferentially to single-stranded, linear DNA. It also seems to bind ATP. This Lactobacillus johnsonii (strain CNCM I-12250 / La1 / NCC 533) protein is DNA replication and repair protein RecF.